The chain runs to 309 residues: Ribosomal RNA small subunit methyltransferase H (309 aa).

S-adenosyl-L-methionine contacts are provided by residues 33–35 (GGH), Asp53, Phe79, Asp100, and Gln107.

Belongs to the methyltransferase superfamily. RsmH family.

The protein localises to the cytoplasm. It carries out the reaction cytidine(1402) in 16S rRNA + S-adenosyl-L-methionine = N(4)-methylcytidine(1402) in 16S rRNA + S-adenosyl-L-homocysteine + H(+). Its function is as follows. Specifically methylates the N4 position of cytidine in position 1402 (C1402) of 16S rRNA. The sequence is that of Ribosomal RNA small subunit methyltransferase H from Clostridium botulinum (strain Loch Maree / Type A3).